The primary structure comprises 152 residues: Ribosome maturation factor RimP (152 aa).

Belongs to the RimP family.

It localises to the cytoplasm. Required for maturation of 30S ribosomal subunits. The polypeptide is Ribosome maturation factor RimP (Erwinia tasmaniensis (strain DSM 17950 / CFBP 7177 / CIP 109463 / NCPPB 4357 / Et1/99)).